Reading from the N-terminus, the 828-residue chain is Conserved oligomeric Golgi complex subunit 3 (828 aa).

Ala-2 bears the N-acetylalanine mark. The tract at residues 504 to 543 (DEQKKVPSEASFSDVHLEEGESNSLTKSGSTESLNPRPQT) is disordered. The segment covering 525-543 (SNSLTKSGSTESLNPRPQT) has biased composition (polar residues). Ser-663 is modified (phosphoserine).

It belongs to the COG3 family. As to quaternary structure, component of the conserved oligomeric Golgi complex which is composed of eight different subunits and is required for normal Golgi morphology and localization. Interacts with TMEM115. In terms of tissue distribution, widely expressed with highest levels in pancreas and testis and lowest levels in lung.

It localises to the golgi apparatus. It is found in the golgi stack membrane. Its function is as follows. Involved in ER-Golgi transport. Also involved in retrograde (Golgi to ER) transport. In Homo sapiens (Human), this protein is Conserved oligomeric Golgi complex subunit 3 (COG3).